The following is a 62-amino-acid chain: MQKIFIILVLFCILKFNVDVEGRIASQCDLSACKERCEKQNKNGKCVIETEMDLVYRLCKCY.

Positions 1–22 are cleaved as a signal peptide; it reads MQKIFIILVLFCILKFNVDVEG. Disulfide bonds link C28/C46, C33/C59, and C37/C61.

This sequence belongs to the short scorpion toxin superfamily. Potassium channel inhibitor family. Alpha-KTx 23 subfamily. Expressed by the venom gland.

Its subcellular location is the secreted. Functionally, may block potassium channels. This is U10-buthitoxin-Hj1a from Hottentotta judaicus (Black scorpion).